The following is a 66-amino-acid chain: Large ribosomal subunit protein bL32 (66 aa).

Positions 1–18 (MAIVPKRKTSKQRKHKRR) are enriched in basic residues. The tract at residues 1-21 (MAIVPKRKTSKQRKHKRRTND) is disordered.

This sequence belongs to the bacterial ribosomal protein bL32 family.

This chain is Large ribosomal subunit protein bL32, found in Mycoplasmopsis agalactiae (strain NCTC 10123 / CIP 59.7 / PG2) (Mycoplasma agalactiae).